A 901-amino-acid polypeptide reads, in one-letter code: HTH-type transcriptional regulator MalT (901 aa).

39–46 contacts ATP; that stretch reads SPAGYGKT. Positions 829–894 constitute an HTH luxR-type domain; the sequence is ELIRTSPLTQ…AAVQHAQKLL (66 aa). The H-T-H motif DNA-binding region spans 853-872; that stretch reads NEQIAGELEVAATTIKTHIR.

This sequence belongs to the MalT family. In terms of assembly, monomer in solution. Oligomerizes to an active state in the presence of the positive effectors ATP and maltotriose.

Activated by ATP and maltotriose, which are both required for DNA binding. Its function is as follows. Positively regulates the transcription of the maltose regulon whose gene products are responsible for uptake and catabolism of malto-oligosaccharides. Specifically binds to the promoter region of its target genes, recognizing a short DNA motif called the MalT box. This Shigella flexneri serotype 5b (strain 8401) protein is HTH-type transcriptional regulator MalT.